Consider the following 594-residue polypeptide: Putative aldehyde oxidase Art an 7 (594 aa).

Positions 1 to 23 are cleaved as a signal peptide; the sequence is MASSIKTVILFLLPLLLAYSVLA. Residues 28–56 are disordered; the sequence is TDGGDKPGPEIDDGGGDKPVPGNNDGASD.

In terms of processing, the N-terminus is blocked. Post-translationally, glycosylated. As to expression, expressed in pollen (at protein level).

The protein resides in the cytoplasm. It carries out the reaction an aldehyde + O2 + H2O = a carboxylate + H2O2 + H(+). In terms of biological role, catalyzes the oxidation of aldehydes to the corresponding carboxylate by coupling the reaction to the reduction of dioxygen to hydrogen peroxide. Substrates include glyoxal and other aldehydes. Does not have enzymatic activity on D-galactose. The chain is Putative aldehyde oxidase Art an 7 from Artemisia annua (Sweet wormwood).